Reading from the N-terminus, the 496-residue chain is Probable cytosol aminopeptidase (496 aa).

Mn(2+) contacts are provided by Lys258 and Asp263. Lys270 is an active-site residue. 3 residues coordinate Mn(2+): Asp281, Asp340, and Glu342. Arg344 is a catalytic residue.

The protein belongs to the peptidase M17 family. Mn(2+) is required as a cofactor.

It localises to the cytoplasm. The enzyme catalyses Release of an N-terminal amino acid, Xaa-|-Yaa-, in which Xaa is preferably Leu, but may be other amino acids including Pro although not Arg or Lys, and Yaa may be Pro. Amino acid amides and methyl esters are also readily hydrolyzed, but rates on arylamides are exceedingly low.. It carries out the reaction Release of an N-terminal amino acid, preferentially leucine, but not glutamic or aspartic acids.. Presumably involved in the processing and regular turnover of intracellular proteins. Catalyzes the removal of unsubstituted N-terminal amino acids from various peptides. This Helicobacter pylori (strain Shi470) protein is Probable cytosol aminopeptidase.